We begin with the raw amino-acid sequence, 1205 residues long: Nitric oxide synthase 3 (1205 aa).

Disordered regions lie at residues Met1–Gly20 and Cys26–Val73. Positions Ser33–Pro47 are enriched in pro residues. Zn(2+)-binding residues include Cys96 and Cys101. Residues Arg100–Lys489 are interaction with NOSIP. Ser104 is a binding site for (6R)-L-erythro-5,6,7,8-tetrahydrobiopterin. Residue Ser116 is modified to Phosphoserine. Cys186 is a binding site for heme b. L-arginine-binding residues include Gln250, Trp359, Tyr360, and Glu364. Residue Arg368 coordinates (6R)-L-erythro-5,6,7,8-tetrahydrobiopterin. Asn369 contributes to the L-arginine binding site. (6R)-L-erythro-5,6,7,8-tetrahydrobiopterin-binding residues include Ala449, Trp450, and Phe463. Tyr478 serves as a coordination point for heme b. Thr498 carries the phosphothreonine modification. 6 residues coordinate FMN: Ser529, Glu530, Thr531, Arg533, Ser575, and Thr576. 3 positions are modified to phosphoserine: Ser618, Ser636, and Ser641. FMN contacts are provided by Ser657, Cys664, Glu690, and Gln694. Arg781 provides a ligand contact to NADP(+). Residues Leu796–Arg850 are disordered. His803 is a binding site for FAD. The span at Pro833–Ser844 shows a compositional bias: pro residues. Positions 939, 941, 942, 957, and 959 each coordinate FAD. NADP(+) contacts are provided by Thr1018, Arg1051, Ser1080, Arg1081, Lys1087, Tyr1089, and Gln1091. At Thr1177 the chain carries Phosphothreonine. A phosphoserine mark is found at Ser1179 and Ser1181.

It belongs to the NOS family. As to quaternary structure, homodimer. Interacts with NOSIP and NOSTRIN. Interacts with HSP90AB1. Forms a complex with ASL, ASS1 and SLC7A1; the complex regulates cell-autonomous L-arginine synthesis and citrulline recycling while channeling extracellular L-arginine to nitric oxide synthesis pathway. Heme b is required as a cofactor. It depends on FAD as a cofactor. The cofactor is FMN. (6R)-L-erythro-5,6,7,8-tetrahydrobiopterin serves as cofactor.

The protein resides in the membrane. It is found in the caveola. It localises to the cytoplasm. Its subcellular location is the cytoskeleton. The protein localises to the golgi apparatus. The protein resides in the cell membrane. The enzyme catalyses 2 L-arginine + 3 NADPH + 4 O2 + H(+) = 2 L-citrulline + 2 nitric oxide + 3 NADP(+) + 4 H2O. Stimulated by calcium/calmodulin. Inhibited by NOSIP and NOSTRIN. Functionally, produces nitric oxide (NO) which is implicated in vascular smooth muscle relaxation through a cGMP-mediated signal transduction pathway. NO mediates vascular endothelial growth factor (VEGF)-induced angiogenesis in coronary vessels and promotes blood clotting through the activation of platelets. This is Nitric oxide synthase 3 (NOS3) from Ovis aries (Sheep).